A 119-amino-acid polypeptide reads, in one-letter code: Thrombin-like enzyme TLBan (119 aa).

In terms of domain architecture, Peptidase S1 spans 1-112; the sequence is VIGGDECNIN…YLLWIQSIIA (112 aa). Active-site charge relay system residues include His-40 and Asp-59. Cys-54 and Cys-118 are joined by a disulfide.

As to quaternary structure, monomer. Contains both N-linked carbohydrates and sialic acid. Expressed by the venom gland.

Its subcellular location is the secreted. With respect to regulation, strongly inhibited by PMSF and slightly inhibited by EDTA and soybean trypsin inhibitor. Thrombin-like snake venom serine protease, with high clotting activity in vitro. Also has fibrinogenolytic ability, showing a fast degradation of fibrinogen Aalpha chain (FGA), a slow degradation of Bbeta chain (FGB) and no degradation of gamma chain. Also causes platelet aggregation in platelet rich plasma (PRP) and washed platelet suspension. The polypeptide is Thrombin-like enzyme TLBan (Bothrocophias andianus (Andean lancehead)).